Here is a 354-residue protein sequence, read N- to C-terminus: Abasic site processing protein HMCES (354 aa).

The active-site Nucleophile is Cys-2. Cys-2 is modified (thiazolidine linkage to a ring-opened DNA abasic site). Glu-127 is an active-site residue. Residues Lys-148 and Lys-151 each participate in a glycyl lysine isopeptide (Lys-Gly) (interchain with G-Cter in SUMO2) cross-link. Position 160 is a phosphoserine (Ser-160). A Glycyl lysine isopeptide (Lys-Gly) (interchain with G-Cter in SUMO2) cross-link involves residue Lys-276. The segment at 292–354 is disordered; it reads ATKSPKKEDS…EPVAKRPYSQ (63 aa). Phosphoserine is present on Ser-295. The segment covering 296–309 has biased composition (basic and acidic residues); the sequence is PKKEDSKTPQKEES. A Glycyl lysine isopeptide (Lys-Gly) (interchain with G-Cter in SUMO2) cross-link involves residue Lys-306. Ser-322 is subject to Phosphoserine. The short motif at 332–338 is the PIP-box element; sequence GLLEQWL. Residues 337–348 are compositionally biased toward basic and acidic residues; it reads WLKREKEEEPVA. Glycyl lysine isopeptide (Lys-Gly) (interchain with G-Cter in SUMO2) cross-links involve residues Lys-339 and Lys-342.

This sequence belongs to the SOS response-associated peptidase family. In terms of assembly, interacts (via PIP-box motif) with PCNA. Post-translationally, ubiquitinated; the covalent HMCES DNA-protein cross-link is ubiquitinated, leading to its degradation by the proteasome.

The protein localises to the chromosome. Its activity is regulated as follows. Formation and reversal of DNA-protein cross-link depends on DNA context. Catalyzes formation of the thiazolidine linkage in presence of abasic sites in single-stranded DNA. Mediates the reversal of the thiazolidine cross-link in presence of double stranded DNA. Functionally, sensor of abasic sites in single-stranded DNA (ssDNA) required to preserve genome integrity by promoting error-free repair of abasic sites. Acts as an enzyme that recognizes and binds abasic sites in ssDNA at replication forks and chemically modifies the lesion by forming a covalent cross-link with DNA: forms a stable thiazolidine linkage between a ring-opened abasic site and the alpha-amino and sulfhydryl substituents of its N-terminal catalytic cysteine residue. Promotes error-free repair by protecting abasic sites from translesion synthesis (TLS) polymerases and endonucleases that are error-prone and would generate mutations and double-strand breaks. The HMCES DNA-protein cross-link is then either reversed or degraded. HMCES is able to catalyze the reversal of its thiazolidine cross-link and cycle between a cross-link and a non-cross-linked state depending on DNA context: mediates self-reversal of the thiazolidine cross-link in double stranded DNA, allowing APEX1 to initiate downstream repair of abasic sites. The HMCES DNA-protein cross-link can also be degraded by the SPRTN metalloprotease following unfolding by the BRIP1/FANCJ helicase. Has preference for ssDNA, but can also accommodate double-stranded DNA with 3' or 5' overhang (dsDNA), and dsDNA-ssDNA 3' junction. Plays a protective role during somatic hypermutation of immunoglobulin genes in B-cells: acts via its ability to form covalent cross-links with abasic sites, thereby limiting the accumulation of deletions in somatic hypermutation target regions. Also involved in class switch recombination (CSR) in B-cells independently of the formation of a DNA-protein cross-link: acts by binding and protecting ssDNA overhangs to promote DNA double-strand break repair through the microhomology-mediated alternative-end-joining (Alt-EJ) pathway. Acts as a protease: mediates autocatalytic processing of its N-terminal methionine in order to expose the catalytic cysteine. This is Abasic site processing protein HMCES from Pongo abelii (Sumatran orangutan).